The chain runs to 129 residues: Small ribosomal subunit protein uS13 (129 aa).

Residues G96–A129 form a disordered region.

This sequence belongs to the universal ribosomal protein uS13 family. Part of the 30S ribosomal subunit. Forms a loose heterodimer with protein S19. Forms two bridges to the 50S subunit in the 70S ribosome.

In terms of biological role, located at the top of the head of the 30S subunit, it contacts several helices of the 16S rRNA. In the 70S ribosome it contacts the 23S rRNA (bridge B1a) and protein L5 of the 50S subunit (bridge B1b), connecting the 2 subunits; these bridges are implicated in subunit movement. Contacts the tRNAs in the A and P-sites. In Opitutus terrae (strain DSM 11246 / JCM 15787 / PB90-1), this protein is Small ribosomal subunit protein uS13.